Here is a 303-residue protein sequence, read N- to C-terminus: tRNA dimethylallyltransferase (303 aa).

12–19 (GTTASGKS) is an ATP binding site. Residue 14–19 (TASGKS) coordinates substrate. The tract at residues 37–40 (DSRQ) is interaction with substrate tRNA.

It belongs to the IPP transferase family. As to quaternary structure, monomer. Mg(2+) serves as cofactor.

It catalyses the reaction adenosine(37) in tRNA + dimethylallyl diphosphate = N(6)-dimethylallyladenosine(37) in tRNA + diphosphate. Catalyzes the transfer of a dimethylallyl group onto the adenine at position 37 in tRNAs that read codons beginning with uridine, leading to the formation of N6-(dimethylallyl)adenosine (i(6)A). This Synechocystis sp. (strain ATCC 27184 / PCC 6803 / Kazusa) protein is tRNA dimethylallyltransferase.